The primary structure comprises 246 residues: Glucosamine-6-phosphate deaminase (246 aa).

The Proton acceptor; for enolization step role is filled by Asp67. Asn136 (for ring-opening step) is an active-site residue. His138 functions as the Proton acceptor; for ring-opening step in the catalytic mechanism. Glu143 serves as the catalytic For ring-opening step.

It belongs to the glucosamine/galactosamine-6-phosphate isomerase family. NagB subfamily.

It carries out the reaction alpha-D-glucosamine 6-phosphate + H2O = beta-D-fructose 6-phosphate + NH4(+). It participates in amino-sugar metabolism; N-acetylneuraminate degradation; D-fructose 6-phosphate from N-acetylneuraminate: step 5/5. Functionally, catalyzes the reversible isomerization-deamination of glucosamine 6-phosphate (GlcN6P) to form fructose 6-phosphate (Fru6P) and ammonium ion. This chain is Glucosamine-6-phosphate deaminase, found in Halalkalibacterium halodurans (strain ATCC BAA-125 / DSM 18197 / FERM 7344 / JCM 9153 / C-125) (Bacillus halodurans).